Reading from the N-terminus, the 697-residue chain is Elongation factor G (697 aa).

The tr-type G domain occupies 8–282 (EDYRNIGIMA…AVVDYLPSPL (275 aa)). GTP contacts are provided by residues 17 to 24 (AHIDAGKT), 81 to 85 (DTPGH), and 135 to 138 (NKMD).

It belongs to the TRAFAC class translation factor GTPase superfamily. Classic translation factor GTPase family. EF-G/EF-2 subfamily.

Its subcellular location is the cytoplasm. Functionally, catalyzes the GTP-dependent ribosomal translocation step during translation elongation. During this step, the ribosome changes from the pre-translocational (PRE) to the post-translocational (POST) state as the newly formed A-site-bound peptidyl-tRNA and P-site-bound deacylated tRNA move to the P and E sites, respectively. Catalyzes the coordinated movement of the two tRNA molecules, the mRNA and conformational changes in the ribosome. The polypeptide is Elongation factor G (Mycoplasmopsis agalactiae (strain NCTC 10123 / CIP 59.7 / PG2) (Mycoplasma agalactiae)).